A 340-amino-acid polypeptide reads, in one-letter code: Porphobilinogen deaminase (340 aa).

Cys258 is subject to S-(dipyrrolylmethanemethyl)cysteine.

The protein belongs to the HMBS family. The cofactor is dipyrromethane.

The catalysed reaction is 4 porphobilinogen + H2O = hydroxymethylbilane + 4 NH4(+). The protein operates within porphyrin-containing compound metabolism; protoporphyrin-IX biosynthesis; coproporphyrinogen-III from 5-aminolevulinate: step 2/4. Its function is as follows. Tetrapolymerization of the monopyrrole PBG into the hydroxymethylbilane pre-uroporphyrinogen in several discrete steps. The protein is Porphobilinogen deaminase (HEM3) of Candida albicans (strain SC5314 / ATCC MYA-2876) (Yeast).